Here is a 377-residue protein sequence, read N- to C-terminus: Putative glutamate--cysteine ligase 2 (377 aa).

This sequence belongs to the glutamate--cysteine ligase type 2 family. YbdK subfamily.

The catalysed reaction is L-cysteine + L-glutamate + ATP = gamma-L-glutamyl-L-cysteine + ADP + phosphate + H(+). In terms of biological role, ATP-dependent carboxylate-amine ligase which exhibits weak glutamate--cysteine ligase activity. This chain is Putative glutamate--cysteine ligase 2, found in Pseudomonas aeruginosa (strain ATCC 15692 / DSM 22644 / CIP 104116 / JCM 14847 / LMG 12228 / 1C / PRS 101 / PAO1).